A 124-amino-acid polypeptide reads, in one-letter code: Sporulation initiation phosphotransferase F (124 aa).

Positions Lys-5 to Leu-119 constitute a Response regulatory domain. Residues Asp-10, Asp-11, Asp-54, and Lys-56 each contribute to the Mg(2+) site. Asp-54 is subject to 4-aspartylphosphate.

It depends on Mg(2+) as a cofactor. In terms of processing, phosphorylated by KinA and KinB. Dephosphorylated by RapA and RapB.

The protein localises to the cytoplasm. Its function is as follows. Key element in the phosphorelay regulating sporulation initiation. Phosphorylation of spo0B during sporulation initiation. This is Sporulation initiation phosphotransferase F (spo0F) from Bacillus subtilis (strain 168).